The sequence spans 248 residues: Delayed minus-nitrogen induction protein 2 (248 aa).

The next 4 helical transmembrane spans lie at 26–46, 110–130, 144–164, and 186–206; these read IFSN…CCSC, VHPV…VLTI, ISCL…MALA, and GVAA…FSLI.

Belongs to the SUR7 family.

It is found in the membrane. In Schizosaccharomyces pombe (strain 972 / ATCC 24843) (Fission yeast), this protein is Delayed minus-nitrogen induction protein 2 (dni2).